Here is a 283-residue protein sequence, read N- to C-terminus: uncharacterized protein (283 aa).

The Proton donor role is filled by Tyr-55.

It belongs to the aldo/keto reductase family.

The protein resides in the cytoplasm. The protein localises to the nucleus. This is an uncharacterized protein from Schizosaccharomyces pombe (strain 972 / ATCC 24843) (Fission yeast).